The chain runs to 295 residues: sn-glycerol-3-phosphate transport system permease protein UgpA (295 aa).

The Cytoplasmic portion of the chain corresponds to 1-11 (MSSFRPVFRSR). The chain crosses the membrane as a helical span at residues 12–32 (WLPYLLVAPQLVITVIFFIWP). At 33–80 (AGEALWYSLQSVDPFGFSSQFVGLENFVALFHDSYYLDAFWTTIKFSA) the chain is on the periplasmic side. Positions 76–284 (IKFSALVTFS…FLVIILTVVQ (209 aa)) constitute an ABC transmembrane type-1 domain. A helical transmembrane segment spans residues 81–101 (LVTFSGLLVSLFFAALVDYVV). Over 102-109 (RGSRFYQT) the chain is Cytoplasmic. Residues 110-130 (LMLLPYAVAPAVAAVLWIFLF) form a helical membrane-spanning segment. The Periplasmic segment spans residues 131–157 (NPGRGLITHFLGEFGYDWNHAQNSGQA). The helical transmembrane segment at 158-178 (MFLVVFASVWKQISYNFLFFF) threads the bilayer. Residues 179-207 (AALQSIPRSLVEAAAIDGAGPIRRFFRLS) are Cytoplasmic-facing. Residues 208–228 (LPLIAPVSFFLLVVNLVYAFF) form a helical membrane-spanning segment. Over 229-262 (DTFPVIDAATAGGPVQATTTLIYKIYREGFTGLD) the chain is Periplasmic. Residues 263–283 (LSASAAQSVVLMFLVIILTVV) traverse the membrane as a helical segment. The Cytoplasmic portion of the chain corresponds to 284-295 (QFRYVESKVRYQ).

It belongs to the binding-protein-dependent transport system permease family. UgpAE subfamily. As to quaternary structure, the complex is composed of two ATP-binding proteins (UgpC), two transmembrane proteins (UgpA and UgpE) and a solute-binding protein (UgpB).

The protein localises to the cell inner membrane. In terms of biological role, part of the ABC transporter complex UgpBAEC involved in sn-glycerol-3-phosphate (G3P) import. Probably responsible for the translocation of the substrate across the membrane. This Salmonella choleraesuis (strain SC-B67) protein is sn-glycerol-3-phosphate transport system permease protein UgpA (ugpA).